The primary structure comprises 76 residues: Conotoxin Am6.3 (76 aa).

The signal sequence occupies residues 1 to 22 (MKLTCMMIIAVLFLTAWTFATA). 3 disulfide bridges follow: Cys52-Cys67, Cys59-Cys71, and Cys66-Cys75.

Belongs to the conotoxin O1 superfamily. Post-translationally, is not hydroxylated. In terms of tissue distribution, expressed by the venom duct.

The protein resides in the secreted. Functionally, probable toxin that inhibits ion channels. The polypeptide is Conotoxin Am6.3 (Conus amadis (Amadis cone)).